Reading from the N-terminus, the 375-residue chain is Coproporphyrin III ferrochelatase (375 aa).

Residues S59 and Y128 each coordinate Fe-coproporphyrin III. Fe(2+) contacts are provided by H191 and E286.

This sequence belongs to the ferrochelatase family.

It is found in the cytoplasm. It catalyses the reaction Fe-coproporphyrin III + 2 H(+) = coproporphyrin III + Fe(2+). Its pathway is porphyrin-containing compound metabolism; protoheme biosynthesis. Functionally, involved in coproporphyrin-dependent heme b biosynthesis. Catalyzes the insertion of ferrous iron into coproporphyrin III to form Fe-coproporphyrin III. This chain is Coproporphyrin III ferrochelatase, found in Streptomyces griseus subsp. griseus (strain JCM 4626 / CBS 651.72 / NBRC 13350 / KCC S-0626 / ISP 5235).